A 361-amino-acid polypeptide reads, in one-letter code: Probable mannose-1-phosphate guanylyltransferase 2 (361 aa).

Residues Leu6 and Val7 each coordinate GDP-alpha-D-mannose. 5 residues coordinate diphosphate: Gly9, Gly11, Thr12, Arg13, and Lys23. Gly85, Asn109, Asp111, Gly146, and Asn173 together coordinate GDP-alpha-D-mannose.

The protein belongs to the transferase hexapeptide repeat family.

It carries out the reaction alpha-D-mannose 1-phosphate + GTP + H(+) = GDP-alpha-D-mannose + diphosphate. The protein operates within nucleotide-sugar biosynthesis; GDP-alpha-D-mannose biosynthesis; GDP-alpha-D-mannose from alpha-D-mannose 1-phosphate (GTP route): step 1/1. Catalyzes a reaction of the Smirnoff-Wheeler pathway, the major route to ascorbate biosynthesis in plants. This is Probable mannose-1-phosphate guanylyltransferase 2 from Oryza sativa subsp. japonica (Rice).